We begin with the raw amino-acid sequence, 136 residues long: 2-hydroxyisobutanoyl-CoA mutase small subunit (136 aa).

Positions 5–133 constitute a B12-binding domain; sequence PIRVLLAKVG…DSIRSLVAAR (129 aa). Position 18 (His-18) interacts with adenosylcob(III)alamin.

Belongs to the acyl-CoA mutase small subunit family. As to quaternary structure, homotetramer composed of two large substrate-binding subunits (HcmA) and two small cobalamin-binding subunits (HcmB). Adenosylcob(III)alamin serves as cofactor.

It carries out the reaction 2-hydroxyisobutanoyl-CoA = (3S)-3-hydroxybutanoyl-CoA. Functionally, together with HcmA, catalyzes the isomerization of 2-hydroxyisobutyryl-CoA and 3-hydroxybutyryl-CoA. Is specific for 2-hydroxyisobutyryl-CoA and (S)-3-hydroxybutyryl-CoA, and shows only very low activity with (R)-3-hydroxybutyryl-CoA, isobutyryl-CoA and butyryl-CoA. In vitro, can isomerize pivalyl-CoA and isovaleryl-CoA, with much lower efficiency. Plays a central role in the degradation of substrates bearing a tert-butyl moiety, such as the fuel oxygenate methyl tert-butyl ether (MTBE) and its metabolites. This Aquincola tertiaricarbonis protein is 2-hydroxyisobutanoyl-CoA mutase small subunit.